The primary structure comprises 218 residues: Thiopurine S-methyltransferase (218 aa).

4 residues coordinate S-adenosyl-L-methionine: tryptophan 10, leucine 45, glutamate 66, and arginine 123.

This sequence belongs to the class I-like SAM-binding methyltransferase superfamily. TPMT family.

It localises to the cytoplasm. The enzyme catalyses S-adenosyl-L-methionine + a thiopurine = S-adenosyl-L-homocysteine + a thiopurine S-methylether.. The sequence is that of Thiopurine S-methyltransferase from Shewanella sp. (strain ANA-3).